Here is a 270-residue protein sequence, read N- to C-terminus: Basigin (270 aa).

A signal peptide spans 1-21; sequence MAAVLFALLALALLRAGGASA. Residues 22–103 form the Ig-like C2-type domain; the sequence is AAGTVTTSVQ…TGEATLTVDG (82 aa). The Extracellular portion of the chain corresponds to 22-207; that stretch reads AAGTVTTSVQ…VTLRVRSRLA (186 aa). 2 disulfide bridges follow: C41–C87 and C126–C185. N44, N75, N152, and N186 each carry an N-linked (GlcNAc...) asparagine glycan. Residues 105–203 enclose the Ig-like V-type domain; that stretch reads PRIKAVKKSE…DAAVVTLRVR (99 aa). Residues 208-228 form a helical membrane-spanning segment; it reads ALWPFLGIVAEVLVLVTVIFI. Topologically, residues 229–270 are cytoplasmic; it reads YEKRRKPDEVLDDEDAGAAPLKSSGHHVNDDKGKNVRQRNAS. The disordered stretch occupies residues 239–270; that stretch reads LDDEDAGAAPLKSSGHHVNDDKGKNVRQRNAS. Position 252 is a phosphoserine (S252).

As to quaternary structure, homooligomer. Interacts with VEGFA, KDR/VEGFR2, PPIA/CYPA, SLC1A3, SLC16A12, SLC16A11, ATP1B2, MAG, L1CAM and AJAP1. Interacts with PPIL2; regulates BSG transport to the cell membrane. Interacts with XKR8; promoting its localization at the cell membrane. Interacts with SLC16A3; interaction mediates SLC16A3 targeting to the plasma membrane. Interacts with SLC16A1; interaction mediates SLC16A1 targeting to the plasma membrane. Interacts with SLC16A6; this interaction mediates targeting to the plasma membrane.

The protein localises to the cell membrane. Its subcellular location is the endoplasmic reticulum membrane. The protein resides in the basolateral cell membrane. Functionally, signaling receptor for cyclophilins, essential for PPIA/CYPA and PPIB/CYPB-dependent signaling related to chemotaxis and adhesion of immune cells. Plays an important role in targeting the monocarboxylate transporters SLC16A1/GLUT1, SLC16A3, SLC16A8, SLC16A11 and SLC16A12 to the plasma membrane. Acts as a coreceptor for vascular endothelial growth factor receptor 2 (KDR/VEGFR2) in endothelial cells enhancing its VEGFA-mediated activation and downstream signaling. Promotes angiogenesis through EPAS1/HIF2A-mediated up-regulation of VEGFA and KDR/VEGFR2 in endothelial cells. The protein is Basigin (BSG) of Oryctolagus cuniculus (Rabbit).